We begin with the raw amino-acid sequence, 344 residues long: Meiotic expression up-regulated protein 26 (344 aa).

The protein localises to the nucleus. This chain is Meiotic expression up-regulated protein 26 (meu26), found in Schizosaccharomyces pombe (strain 972 / ATCC 24843) (Fission yeast).